The following is a 125-amino-acid chain: Glucose-1-phosphate adenylyltransferase small subunit (125 aa).

This sequence belongs to the bacterial/plant glucose-1-phosphate adenylyltransferase family. In terms of assembly, heterotetramer. In terms of tissue distribution, leaves.

The protein resides in the plastid. Its subcellular location is the chloroplast. The protein localises to the amyloplast. The enzyme catalyses alpha-D-glucose 1-phosphate + ATP + H(+) = ADP-alpha-D-glucose + diphosphate. The protein operates within glycan biosynthesis; starch biosynthesis. Its activity is regulated as follows. Activated by 3'phosphoglycerate, inhibited by orthophosphate. Allosteric regulation. In terms of biological role, this protein plays a role in synthesis of starch. It catalyzes the synthesis of the activated glycosyl donor, ADP-glucose from Glc-1-P and ATP. This chain is Glucose-1-phosphate adenylyltransferase small subunit (GLG1), found in Zea mays (Maize).